Here is a 378-residue protein sequence, read N- to C-terminus: Sperm microtubule associated protein 2 (378 aa).

2 disordered regions span residues 1 to 35 and 47 to 79; these read MGEL…SDGS and WLQS…LPEV. Residues 47-56 are compositionally biased toward polar residues; sequence WLQSSQATTE. The span at 61–77 shows a compositional bias: acidic residues; it reads DPEEEIPPEEMVGEELP. THEG repeat units lie at residues 113–132, 179–198, 217–236, 253–272, 285–304, 321–340, and 355–374; these read AKCR…PKFN, TITV…PKRF, STLE…PKIR, AAQM…PRAP, PKPY…PKAL, VTKN…PKIR, and ASLV…PKHI. Ser290 is modified (phosphoserine).

As to quaternary structure, interacts with CCT5.

Its subcellular location is the nucleus. Its function is as follows. May be involved (but not essential) in spermatogenesis. The sequence is that of Sperm microtubule associated protein 2 from Rattus norvegicus (Rat).